We begin with the raw amino-acid sequence, 372 residues long: Peptide chain release factor 2 (372 aa).

At Gln253 the chain carries N5-methylglutamine.

The protein belongs to the prokaryotic/mitochondrial release factor family. Methylated by PrmC. Methylation increases the termination efficiency of RF2.

Its subcellular location is the cytoplasm. Peptide chain release factor 2 directs the termination of translation in response to the peptide chain termination codons UGA and UAA. The polypeptide is Peptide chain release factor 2 (Mycolicibacterium gilvum (strain PYR-GCK) (Mycobacterium gilvum (strain PYR-GCK))).